Consider the following 369-residue polypeptide: S-adenosylmethionine:tRNA ribosyltransferase-isomerase (369 aa).

It belongs to the QueA family. Monomer.

The protein resides in the cytoplasm. The enzyme catalyses 7-aminomethyl-7-carbaguanosine(34) in tRNA + S-adenosyl-L-methionine = epoxyqueuosine(34) in tRNA + adenine + L-methionine + 2 H(+). The protein operates within tRNA modification; tRNA-queuosine biosynthesis. Its function is as follows. Transfers and isomerizes the ribose moiety from AdoMet to the 7-aminomethyl group of 7-deazaguanine (preQ1-tRNA) to give epoxyqueuosine (oQ-tRNA). The sequence is that of S-adenosylmethionine:tRNA ribosyltransferase-isomerase from Acaryochloris marina (strain MBIC 11017).